The sequence spans 160 residues: Transcriptional repressor NrdR (160 aa).

A zinc finger lies at 3–34 (CPSCQNTDSRVLESRAADGGRSVRRRRECLNC). Residues 49-139 (ITVIKRNGNR…VYRQFRGIDD (91 aa)) enclose the ATP-cone domain.

This sequence belongs to the NrdR family. Zn(2+) is required as a cofactor.

Negatively regulates transcription of bacterial ribonucleotide reductase nrd genes and operons by binding to NrdR-boxes. The polypeptide is Transcriptional repressor NrdR (Synechococcus sp. (strain CC9605)).